The chain runs to 355 residues: MSFDVLTINPGSTSTKLAVYQGDKVLFEETVRHTMQELADFNNVQEQFDFRWQVLRRVMDAHGYDVKKLQAVVGRGGLLRPVAGGTYMVTEKMIDDLKENKYGEHASNLGALLAKKLADELTIPSFIVDPVVVDEMQEIARISGNAFIARKSIFHALNHKAAGRKIAKELGKDYEKMNFVIAHLGGGISVAAHRQGKAVDVNNALDGDGPFSPERSGSLPMNDFLEACFSGKWTKRELHELIVGRGGMISYLGTNSMLEVEAKVQAGDVKAIEAFDAMAYQVSKEIGACSVVLQGKVDAIILTGGLARSELFTNKIIEQTNWITSVIIEPGEDELEALNSGVQRVLAGLEKEKEY.

It belongs to the acetokinase family.

It is found in the cytoplasm. The enzyme catalyses butanoate + ATP = butanoyl phosphate + ADP. The polypeptide is Probable butyrate kinase (Listeria monocytogenes serotype 4b (strain CLIP80459)).